The chain runs to 1011 residues: Histone deacetylase 9 (1011 aa).

Residue S22 is modified to Phosphoserine. The segment at 23-27 is interaction with CTBP1; the sequence is PLDLR. 3 disordered regions span residues 110 to 139, 183 to 249, and 262 to 304; these read RQEQEVERHRREQQLPPLRGKDRGRERAVA, TSLD…KDGN, and TESS…EQMV. The segment at 136 to 154 is interaction with MEF2; it reads RAVASTEVKQKLQEFLLSK. An interaction with MAPK10 region spans residues 175–343; sequence LWYTAAHHTS…LPAVPSQLNA (169 aa). A compositionally biased stretch (polar residues) spans 185 to 199; it reads LDQSSPPLSGTSPSY. A compositionally biased stretch (basic and acidic residues) spans 208 to 219; the sequence is DAKDDFPLRKTA. The tract at residues 218–261 is interaction with ETV6; sequence TASEPNLKVRSRLKQKVAERRSSPLLRRKDGNVVTSFKKRMFEV. Phosphoserine occurs at positions 220 and 240. The span at 233-248 shows a compositional bias: basic and acidic residues; sequence KVAERRSSPLLRRKDG. Positions 262–285 are enriched in low complexity; sequence TESSVSSSSPGSGPSSPNNGPTGS. S451 carries the phosphoserine modification. The interval 494–536 is disordered; that stretch reads QLKQPGSHLEEAEEELQGDQAMQEDRAPSSGNSTRSDSSACVD. The span at 522-532 shows a compositional bias: polar residues; sequence SSGNSTRSDSS. Phosphoserine is present on S554. The tract at residues 631–978 is histone deacetylase; that stretch reads SATGIAYDPL…VNALLGNELE (348 aa). 4 residues coordinate Zn(2+): C646, C648, H654, and C731. The active site involves H783.

The protein belongs to the histone deacetylase family. HD type 2 subfamily. As to quaternary structure, homodimer. Interacts with CTBP1. The phosphorylated form interacts with 14-3-3. Interacts with HDAC1 and HDAC3, and probably with HDAC4 and HDAC5. Interacts with MEF2, MAPK10, ETV6, NCOR1 and BCL6. Interacts with FOXP3 in the absence of T-cell stimulation. Post-translationally, phosphorylated on Ser-220 and Ser-450; which promotes 14-3-3-binding, impairs interaction with MEF2, and antagonizes antimyogenic activity. Phosphorylated on Ser-240; which impairs nuclear accumulation. Isoform 7 is phosphorylated on Tyr-1010. Phosphorylated by the PKC kinases PKN1 and PKN2, impairing nuclear import. In terms of processing, sumoylated. In terms of tissue distribution, broadly expressed, with highest levels in brain, heart, muscle and testis. Isoform 3 is present in human bladder carcinoma cells (at protein level).

The protein resides in the nucleus. It catalyses the reaction N(6)-acetyl-L-lysyl-[histone] + H2O = L-lysyl-[histone] + acetate. Its activity is regulated as follows. Inhibited by Trichostatin A (TSA) and suberoylanilide hydroxamic acid. Responsible for the deacetylation of lysine residues on the N-terminal part of the core histones (H2A, H2B, H3 and H4). Histone deacetylation gives a tag for epigenetic repression and plays an important role in transcriptional regulation, cell cycle progression and developmental events. Represses MEF2-dependent transcription. In terms of biological role, isoform 3 lacks active site residues and therefore is catalytically inactive. Represses MEF2-dependent transcription by recruiting HDAC1 and/or HDAC3. Seems to inhibit skeletal myogenesis and to be involved in heart development. Protects neurons from apoptosis, both by inhibiting JUN phosphorylation by MAPK10 and by repressing JUN transcription via HDAC1 recruitment to JUN promoter. This is Histone deacetylase 9 (HDAC9) from Homo sapiens (Human).